The sequence spans 525 residues: C6 finger transcription factor fsqA (525 aa).

Residues C12 to C53 constitute a DNA-binding region (zn(2)-C6 fungal-type). 3 disordered regions span residues R80–M142, E204–G260, and R327–S371. The segment covering P95 to H115 has biased composition (polar residues). Over residues R327–E337 the composition is skewed to polar residues.

The protein localises to the nucleus. Functionally, transcription factor that regulates the expression of the gene cluster that mediates the biosynthesis of the isoquinoline alkaloids fumisoquin A, fumisoquin B and fumisoquin C; as well as small amounts of fumipyrrole as a shunt metabolite. The products of the cluster lead to a brown coloration and are important for growth and conidiation. This Aspergillus fumigatus (strain ATCC MYA-4609 / CBS 101355 / FGSC A1100 / Af293) (Neosartorya fumigata) protein is C6 finger transcription factor fsqA.